Consider the following 454-residue polypeptide: MSKQFVRSAKNLVKGYSSTQVLVRNATSNDNHQVSKDSLIELAEKSYDSADFFEIMDMLDKRLNDKGKYWRHIAKALTVIDYLIRFGSENCVLWCRENLYIIKTLKEFRHEDDEGIDQGQIVRVKAKELTALLSDDERLNEERNMNIKGRNRKGRRRRGTGRSDENDDDLQRAISASRLTAEEDERRRKQDEDYETALQLSKEEEELKRLQDLQRMQQQQGQQQLQQPMYYDIFGNPITPEEYAQFQLQQQQQQQQQQLQQQPMYYDVFGNPITPEELAQFQQQQQLQEQQYLASMQQQQQAMSNNPFAKSEQSSSSPKRNQLVAASSPQQLQQQKQQEPLIQNRTGNQSMTDKYSKLNELLATGTGIDTFGNVGEARIPAQHTKTGTFINSQGTGYRQVSDDPNHNPFLNSQYTGLPSTSVVPTQTGYGFGNQSQQQSQNNGSNNRGYTLIDL.

An ENTH domain is found at asparagine 11–arginine 143. Disordered stretches follow at residues glutamate 142–glutamate 195 and tyrosine 292–serine 350. Positions glycine 149–threonine 160 are enriched in basic residues. Position 160 is a phosphothreonine (threonine 160). At serine 163 the chain carries Phosphoserine. 2 consecutive UIM domains span residues glutamate 165–aspartate 184 and lysine 189–lysine 208. The residue at position 180 (threonine 180) is a Phosphothreonine. Positions threonine 180–aspartate 191 are enriched in basic and acidic residues. Low complexity predominate over residues tyrosine 292–alanine 302. Polar residues-rich tracts occupy residues methionine 303–proline 329 and proline 340–serine 350. Serine 328 is modified (phosphoserine). A Glycyl lysine isopeptide (Lys-Gly) (interchain with G-Cter in ubiquitin) cross-link involves residue lysine 357. Phosphothreonine occurs at positions 364, 366, 384, 386, and 388. The segment covering threonine 384 to arginine 398 has biased composition (polar residues). The interval threonine 384–asparagine 405 is disordered. Phosphothreonine; by PRK1 occurs at positions 395 and 415. Polar residues predominate over residues proline 418–glycine 428. Residues proline 418 to leucine 454 are disordered. The span at glycine 432–asparagine 446 shows a compositional bias: low complexity. The segment at arginine 447–leucine 454 is clathrin-binding.

Belongs to the epsin family. Interacts with EDE1 and PAN1.

Its subcellular location is the cytoplasm. The protein localises to the membrane. In terms of biological role, binds to membranes enriched in phosphatidylinositol 3,5-bisphosphate (PtdIns(3,5)P2) and phosphatidylinositol 4,5-bisphosphate (PtdIns(4,5)P2). Required for endocytosis and localization of actin. Negatively regulated via phosphorylation. The polypeptide is Epsin-1 (ENT1) (Saccharomyces cerevisiae (strain ATCC 204508 / S288c) (Baker's yeast)).